The chain runs to 341 residues: GTPase Obg (341 aa).

Residues 1–159 (MKFLDQAKVY…RTLWLRLKLI (159 aa)) form the Obg domain. The region spanning 160–327 (ADAGLIGLPN…MLRAGAHMIE (168 aa)) is the OBG-type G domain. Residues 166–173 (GLPNAGKS), 191–195 (FTTLY), 212–215 (DIPG), 279–282 (SQID), and 308–310 (SAV) each bind GTP. The Mg(2+) site is built by serine 173 and threonine 193.

This sequence belongs to the TRAFAC class OBG-HflX-like GTPase superfamily. OBG GTPase family. In terms of assembly, monomer. It depends on Mg(2+) as a cofactor.

Its subcellular location is the cytoplasm. Its function is as follows. An essential GTPase which binds GTP, GDP and possibly (p)ppGpp with moderate affinity, with high nucleotide exchange rates and a fairly low GTP hydrolysis rate. Plays a role in control of the cell cycle, stress response, ribosome biogenesis and in those bacteria that undergo differentiation, in morphogenesis control. This is GTPase Obg from Bartonella quintana (strain Toulouse) (Rochalimaea quintana).